Consider the following 128-residue polypeptide: uncharacterized protein (128 aa).

The next 3 helical transmembrane spans lie at methionine 1–leucine 21, valine 51–glycine 71, and alanine 76–valine 96.

It is found in the membrane. This is an uncharacterized protein from Saccharomyces cerevisiae (strain ATCC 204508 / S288c) (Baker's yeast).